The chain runs to 546 residues: CTP synthase (546 aa).

Positions 1–266 are amidoligase domain; it reads MTTRYIFVTG…DDLVVKRFGL (266 aa). S14 is a CTP binding site. Residue S14 coordinates UTP. ATP is bound by residues 15 to 20 and D72; that span reads SLGKGI. D72 and E140 together coordinate Mg(2+). CTP-binding positions include 147–149, 187–192, and K223; these read DIE and KTKPTQ. UTP is bound by residues 187-192 and K223; that span reads KTKPTQ. ATP is bound at residue 239–241; that stretch reads KDV. Residues 291–542 form the Glutamine amidotransferase type-1 domain; sequence VIGMVGKYIE…VAAASAHQKR (252 aa). G352 contributes to the L-glutamine binding site. C379 acts as the Nucleophile; for glutamine hydrolysis in catalysis. Residues 380–383, E403, and R470 each bind L-glutamine; that span reads LGMQ. Active-site residues include H515 and E517.

It belongs to the CTP synthase family. As to quaternary structure, homotetramer.

It carries out the reaction UTP + L-glutamine + ATP + H2O = CTP + L-glutamate + ADP + phosphate + 2 H(+). The catalysed reaction is L-glutamine + H2O = L-glutamate + NH4(+). It catalyses the reaction UTP + NH4(+) + ATP = CTP + ADP + phosphate + 2 H(+). Its pathway is pyrimidine metabolism; CTP biosynthesis via de novo pathway; CTP from UDP: step 2/2. With respect to regulation, allosterically activated by GTP, when glutamine is the substrate; GTP has no effect on the reaction when ammonia is the substrate. The allosteric effector GTP functions by stabilizing the protein conformation that binds the tetrahedral intermediate(s) formed during glutamine hydrolysis. Inhibited by the product CTP, via allosteric rather than competitive inhibition. Functionally, catalyzes the ATP-dependent amination of UTP to CTP with either L-glutamine or ammonia as the source of nitrogen. Regulates intracellular CTP levels through interactions with the four ribonucleotide triphosphates. The chain is CTP synthase from Shewanella sp. (strain MR-4).